The chain runs to 437 residues: MNYPYIPHTDEDVRAMLDFIGVSSIEELFSSIPVSARSSLNIPESRDEFSVFKQLKEISEMNNSLEDYAVFLGAGVYKRYVPTVVYDLAMKPDFLTAYTPYQAEVSQGTLQALFEYQTMVCELTGMEVANASMYDGATALAEAALMSFRLTGKEKVVVARSVHPEYRAVLRTYLEKRGFTVVEAGYDETGRVLLEEVDEETAAIAVQYPNFFGIIEDLDYVRSRSGNALLIVVVEPVSLALLEPPGSYGADIVVGEGQSLGLPMWFGGYSLGIFATREEYVRQMPGRLIGQTVDQAGNTAYTMILQTREQHIRRARATSNICSNHAHAALIAAVYMSVMGPDGLKEVARRSYNAAHYLQERLEEIGFKLCFSGEFFNEFVFNVPEDYPDRWRKMMEKKILGPLPLEEFYPELGDTALACATEVISKEDIEKLLEAMK.

It belongs to the GcvP family. N-terminal subunit subfamily. In terms of assembly, the glycine cleavage system is composed of four proteins: P, T, L and H. In this organism, the P 'protein' is a heterodimer of two subunits.

It carries out the reaction N(6)-[(R)-lipoyl]-L-lysyl-[glycine-cleavage complex H protein] + glycine + H(+) = N(6)-[(R)-S(8)-aminomethyldihydrolipoyl]-L-lysyl-[glycine-cleavage complex H protein] + CO2. In terms of biological role, the glycine cleavage system catalyzes the degradation of glycine. The P protein binds the alpha-amino group of glycine through its pyridoxal phosphate cofactor; CO(2) is released and the remaining methylamine moiety is then transferred to the lipoamide cofactor of the H protein. The polypeptide is Probable glycine dehydrogenase (decarboxylating) subunit 1 (Thermotoga maritima (strain ATCC 43589 / DSM 3109 / JCM 10099 / NBRC 100826 / MSB8)).